The primary structure comprises 342 residues: Phomopsin biosynthesis cluster protein B (342 aa).

The disordered stretch occupies residues 1–22 (MESIAKAKSLPNKGRTYDSQRP). A helical transmembrane segment spans residues 87-107 (VLIIGCAVISLFAIIGALGFA). The disordered stretch occupies residues 118-186 (CASPAHQNPH…QCGESPDEAQ (69 aa)). Residues 144-155 (HSGSHSSSSSTN) show a composition bias toward low complexity. Asn248 carries an N-linked (GlcNAc...) asparagine glycan.

The protein localises to the membrane. Part of the gene cluster that mediates the biosynthesis of the phomopsins, a group of hexapeptide mycotoxins which infects lupins and causes lupinosis disease in livestock. The role of phomB within the phomopsins biosynthesis pathway has still to be determined. The pathway starts with the processing of the precursor phomA by several endopeptidases including kexin proteases as well as the cluster-specific S41 family peptidase phomP1 and the oligopeptidase phomG to produce 10 identical copies of the hexapeptide Tyr-Val-Ile-Pro-Ile-Asp. After being excised from the precursor peptide, the core peptides are cyclized and modified post-translationally by enzymes encoded within the gene cluster. The timing and order of proteolysis of the phomA precursor and PTMs are still unknown. Two tyrosinase-like enzymes, phomQ1 and phomQ2, catalyze the chlorination and hydroxylation of Tyr, respectively. PhomYb, is proposed to be involved in the construction of the macrocyclic structure. The other 4 ustYa family proteins may be involved in PTMs that generate the unique structure of phomopsin A. PhomYa is required for the hydroxylation of C-beta of Tyr. PhomYc, phomYd, and phomYe are responsible for the biosynthesis of 2,3-dehydroisoleucine (dIle), 2,3-dehydroaspartic acid (dAsp), and 3,4-dehydroproline (dPro), respectively. While dIle formation by phomYc is indispensable for the installation of dAsp by phomYd, the order of the other PTMs have not been elucidated yet. Most of the biosynthetic enzymes likely have broad substrate specificity, and thus, there might be a metabolic grid from a precursor to phomopsin A. The enzyme(s) responsible for the biosynthesis of 3,4-dehydrovaline (dVal) have also not been identified yet. Finally, phomM acts as an S-adenosylmethionine-dependent alpha-N-methyltransferase that catalyzes two successive N-methylation reactions, converting N-desmethyl-phomopsin A to phomopsin A and phomopsin A further to an N,N-dimethylated congener called phomopsin E. The protein is Phomopsin biosynthesis cluster protein B of Diaporthe leptostromiformis (Lupinosis disease fungus).